The sequence spans 481 residues: Subtilisin-like protease 1 (481 aa).

The N-terminal stretch at 1–19 (MGVFRFISISLAAVSAANA) is a signal peptide. Residues 20–116 (AQILSMPHAQ…VEPDTIISVH (97 aa)) constitute a propeptide that is removed on maturation. One can recognise an Inhibitor I9 domain in the interval 34–115 (SYIVMMKDDT…FVEPDTIISV (82 aa)). The region spanning 126-400 (SWGLARISSS…NVLINNGGAK (275 aa)) is the Peptidase S8 domain. Catalysis depends on charge relay system residues D158 and H190. The tract at residues 175-198 (GSNQVNDGDDNDRSGHGTHTSGTM) is disordered. N-linked (GlcNAc...) asparagine glycosylation is present at N251. A disordered region spans residues 281-312 (GNDNTDARSSSPASEPSVCTVGASAEDDSRSS). Residues 282 to 294 (NDNTDARSSSPAS) are compositionally biased toward polar residues. S345 serves as the catalytic Charge relay system. The interval 379–455 (ASISDVGPGT…HPHTPFPGGD (77 aa)) is disordered. Residues 424–450 (PQQPAPGEPSTPAPAPMPPTPQHPHTP) are compositionally biased toward pro residues.

Belongs to the peptidase S8 family.

It localises to the secreted. Its function is as follows. Secreted subtilisin-like serine protease with keratinolytic activity that contributes to pathogenicity. The chain is Subtilisin-like protease 1 (SUB1) from Arthroderma gypseum (strain ATCC MYA-4604 / CBS 118893) (Microsporum gypseum).